A 1435-amino-acid polypeptide reads, in one-letter code: Gag-Pol polyprotein (1435 aa).

The N-myristoyl glycine; by host moiety is linked to residue glycine 2. The tract at residues 7 to 31 (VLSAGELDKWEKIRLRPGGKKQYRL) is interaction with Gp41. Residues 8 to 43 (LSAGELDKWEKIRLRPGGKKQYRLKHIVWASRELER) form an interaction with host CALM1 region. Residues 12–19 (ELDKWEKI) form an interaction with host AP3D1 region. An interaction with membrane phosphatidylinositol 4,5-bisphosphate and RNA region spans residues 14-33 (DKWEKIRLRPGGKKQYRLKH). A Nuclear export signal motif is present at residues 16–22 (WEKIRLR). The Nuclear localization signal signature appears at 26 to 32 (KKQYRLK). The segment at 73 to 77 (EELRS) is interaction with membrane phosphatidylinositol 4,5-bisphosphate. The tract at residues 106–128 (EEQNKSKKKAQQAAADTGNSSQV) is disordered. Residue tyrosine 132 is modified to Phosphotyrosine; by host. Positions 189–227 (NTVGGHQAAMQMLKETINEEAAEWDRLHPVHAGPIAPGQ) are interaction with human PPIA/CYPA and NUP153. Positions 277-363 (YSPTSILDIR…GGPGHKARVL (87 aa)) are dimerization/Multimerization of capsid protein p24. CCHC-type zinc fingers lie at residues 390 to 407 (VKCFNCGKEGHIAKNCRA) and 411 to 428 (KGCWKCGKEGHQMKDCTE). The segment at 489 to 493 (PQITL) is dimerization of protease. Residues 508–577 (KEALLDTGAD…TPVNIIGRNL (70 aa)) enclose the Peptidase A2 domain. The For protease activity; shared with dimeric partner role is filled by aspartate 513. 2 dimerization of protease regions span residues 537 to 543 (GIGGFIK) and 576 to 588 (NLLTQIGCTLNFP). The Reverse transcriptase domain maps to 631-821 (EGKISKIGPE…PPFLWMGYEL (191 aa)). Aspartate 697, aspartate 772, and aspartate 773 together coordinate Mg(2+). An RT 'primer grip' region spans residues 814 to 822 (FLWMGYELH). The Tryptophan repeat motif motif lies at 985 to 1001 (WETWWTEYWQATWIPEW). The RNase H type-1 domain occupies 1021 to 1144 (IIGAETFYVD…VDKLVSAGIR (124 aa)). 4 residues coordinate Mg(2+): aspartate 1030, glutamate 1065, aspartate 1085, and aspartate 1136. The segment at 1150 to 1191 (DGIDKAQEEHEKYHSNWRAMASDFNLPPVVAKEIVASCDKCQ) adopts an Integrase-type zinc-finger fold. Histidine 1159, histidine 1163, cysteine 1187, and cysteine 1190 together coordinate Zn(2+). Residues 1201–1351 (VDCSPGIWQL…SAGERIVDII (151 aa)) form the Integrase catalytic domain. Mg(2+)-binding residues include aspartate 1211, aspartate 1263, and glutamate 1299. Residues 1370–1417 (FRVYYRDSRDPLWKGPAKLLWKGEGAVVIQDNSDIKVVPRRKAKIIRD) constitute a DNA-binding region (integrase-type).

In terms of assembly, homotrimer; further assembles as hexamers of trimers. Interacts with gp41 (via C-terminus). Interacts with host CALM1; this interaction induces a conformational change in the Matrix protein, triggering exposure of the myristate group. Interacts with host AP3D1; this interaction allows the polyprotein trafficking to multivesicular bodies during virus assembly. Part of the pre-integration complex (PIC) which is composed of viral genome, matrix protein, Vpr and integrase. As to quaternary structure, homodimer; the homodimer further multimerizes as homohexamers or homopentamers. Interacts with human PPIA/CYPA; This interaction stabilizes the capsid. Interacts with human NUP153. Interacts with host PDZD8; this interaction stabilizes the capsid. Interacts with monkey TRIM5; this interaction destabilizes the capsid. Homodimer, whose active site consists of two apposed aspartic acid residues. In terms of assembly, heterodimer of p66 RT and p51 RT (RT p66/p51). Heterodimerization of RT is essential for DNA polymerase activity. The overall folding of the subdomains is similar in p66 RT and p51 RT but the spatial arrangements of the subdomains are dramatically different. As to quaternary structure, homotetramer; may further associate as a homohexadecamer. Part of the pre-integration complex (PIC) which is composed of viral genome, matrix protein, Vpr and integrase. Interacts with human SMARCB1/INI1 and human PSIP1/LEDGF isoform 1. Interacts with human KPNA3; this interaction might play a role in nuclear import of the pre-integration complex. Interacts with human NUP153; this interaction might play a role in nuclear import of the pre-integration complex. The cofactor is Mg(2+). Post-translationally, specific enzymatic cleavages by the viral protease yield mature proteins. The protease is released by autocatalytic cleavage. The polyprotein is cleaved during and after budding, this process is termed maturation. Proteolytic cleavage of p66 RT removes the RNase H domain to yield the p51 RT subunit. Nucleocapsid protein p7 might be further cleaved after virus entry. Tyrosine phosphorylated presumably in the virion by a host kinase. Phosphorylation is apparently not a major regulator of membrane association. In terms of processing, phosphorylated possibly by host MAPK1; this phosphorylation is necessary for Pin1-mediated virion uncoating. Post-translationally, methylated by host PRMT6, impairing its function by reducing RNA annealing and the initiation of reverse transcription.

The protein localises to the host cell membrane. The protein resides in the host endosome. It is found in the host multivesicular body. It localises to the virion membrane. Its subcellular location is the host nucleus. The protein localises to the host cytoplasm. The protein resides in the virion. The catalysed reaction is Specific for a P1 residue that is hydrophobic, and P1' variable, but often Pro.. It catalyses the reaction Endohydrolysis of RNA in RNA/DNA hybrids. Three different cleavage modes: 1. sequence-specific internal cleavage of RNA. Human immunodeficiency virus type 1 and Moloney murine leukemia virus enzymes prefer to cleave the RNA strand one nucleotide away from the RNA-DNA junction. 2. RNA 5'-end directed cleavage 13-19 nucleotides from the RNA end. 3. DNA 3'-end directed cleavage 15-20 nucleotides away from the primer terminus.. The enzyme catalyses 3'-end directed exonucleolytic cleavage of viral RNA-DNA hybrid.. It carries out the reaction DNA(n) + a 2'-deoxyribonucleoside 5'-triphosphate = DNA(n+1) + diphosphate. Protease: The viral protease is inhibited by many synthetic protease inhibitors (PIs), such as amprenavir, atazanavir, indinavir, loprinavir, nelfinavir, ritonavir and saquinavir. Use of protease inhibitors in tritherapy regimens permit more ambitious therapeutic strategies. Reverse transcriptase/ribonuclease H: RT can be inhibited either by nucleoside RT inhibitors (NRTIs) or by non nucleoside RT inhibitors (NNRTIs). NRTIs act as chain terminators, whereas NNRTIs inhibit DNA polymerization by binding a small hydrophobic pocket near the RT active site and inducing an allosteric change in this region. Classical NRTIs are abacavir, adefovir (PMEA), didanosine (ddI), lamivudine (3TC), stavudine (d4T), tenofovir (PMPA), zalcitabine (ddC), and zidovudine (AZT). Classical NNRTIs are atevirdine (BHAP U-87201E), delavirdine, efavirenz (DMP-266), emivirine (I-EBU), and nevirapine (BI-RG-587). The tritherapies used as a basic effective treatment of AIDS associate two NRTIs and one NNRTI. In terms of biological role, mediates, with Gag polyprotein, the essential events in virion assembly, including binding the plasma membrane, making the protein-protein interactions necessary to create spherical particles, recruiting the viral Env proteins, and packaging the genomic RNA via direct interactions with the RNA packaging sequence (Psi). Gag-Pol polyprotein may regulate its own translation, by the binding genomic RNA in the 5'-UTR. At low concentration, the polyprotein would promote translation, whereas at high concentration, the polyprotein would encapsidate genomic RNA and then shut off translation. Functionally, targets the polyprotein to the plasma membrane via a multipartite membrane-binding signal, that includes its myristoylated N-terminus. Matrix protein is part of the pre-integration complex. Implicated in the release from host cell mediated by Vpu. Binds to RNA. Forms the conical core that encapsulates the genomic RNA-nucleocapsid complex in the virion. Most core are conical, with only 7% tubular. The core is constituted by capsid protein hexamer subunits. The core is disassembled soon after virion entry. Host restriction factors such as TRIM5-alpha or TRIMCyp bind retroviral capsids and cause premature capsid disassembly, leading to blocks in reverse transcription. Capsid restriction by TRIM5 is one of the factors which restricts HIV-1 to the human species. Host PIN1 apparently facilitates the virion uncoating. On the other hand, interactions with PDZD8 or CYPA stabilize the capsid. Its function is as follows. Encapsulates and protects viral dimeric unspliced genomic RNA (gRNA). Binds these RNAs through its zinc fingers. Acts as a nucleic acid chaperone which is involved in rearangement of nucleic acid secondary structure during gRNA retrotranscription. Also facilitates template switch leading to recombination. As part of the polyprotein, participates in gRNA dimerization, packaging, tRNA incorporation and virion assembly. In terms of biological role, aspartyl protease that mediates proteolytic cleavages of Gag and Gag-Pol polyproteins during or shortly after the release of the virion from the plasma membrane. Cleavages take place as an ordered, step-wise cascade to yield mature proteins. This process is called maturation. Displays maximal activity during the budding process just prior to particle release from the cell. Also cleaves Nef and Vif, probably concomitantly with viral structural proteins on maturation of virus particles. Hydrolyzes host EIF4GI and PABP1 in order to shut off the capped cellular mRNA translation. The resulting inhibition of cellular protein synthesis serves to ensure maximal viral gene expression and to evade host immune response. Also mediates cleavage of host YTHDF3. Mediates cleavage of host CARD8, thereby activating the CARD8 inflammasome, leading to the clearance of latent HIV-1 in patient CD4(+) T-cells after viral reactivation; in contrast, HIV-1 can evade CARD8-sensing when its protease remains inactive in infected cells prior to viral budding. Functionally, multifunctional enzyme that converts the viral RNA genome into dsDNA in the cytoplasm, shortly after virus entry into the cell. This enzyme displays a DNA polymerase activity that can copy either DNA or RNA templates, and a ribonuclease H (RNase H) activity that cleaves the RNA strand of RNA-DNA heteroduplexes in a partially processive 3' to 5' endonucleasic mode. Conversion of viral genomic RNA into dsDNA requires many steps. A tRNA(3)-Lys binds to the primer-binding site (PBS) situated at the 5'-end of the viral RNA. RT uses the 3' end of the tRNA primer to perform a short round of RNA-dependent minus-strand DNA synthesis. The reading proceeds through the U5 region and ends after the repeated (R) region which is present at both ends of viral RNA. The portion of the RNA-DNA heteroduplex is digested by the RNase H, resulting in a ssDNA product attached to the tRNA primer. This ssDNA/tRNA hybridizes with the identical R region situated at the 3' end of viral RNA. This template exchange, known as minus-strand DNA strong stop transfer, can be either intra- or intermolecular. RT uses the 3' end of this newly synthesized short ssDNA to perform the RNA-dependent minus-strand DNA synthesis of the whole template. RNase H digests the RNA template except for two polypurine tracts (PPTs) situated at the 5'-end and near the center of the genome. It is not clear if both polymerase and RNase H activities are simultaneous. RNase H probably can proceed both in a polymerase-dependent (RNA cut into small fragments by the same RT performing DNA synthesis) and a polymerase-independent mode (cleavage of remaining RNA fragments by free RTs). Secondly, RT performs DNA-directed plus-strand DNA synthesis using the PPTs that have not been removed by RNase H as primers. PPTs and tRNA primers are then removed by RNase H. The 3' and 5' ssDNA PBS regions hybridize to form a circular dsDNA intermediate. Strand displacement synthesis by RT to the PBS and PPT ends produces a blunt ended, linear dsDNA copy of the viral genome that includes long terminal repeats (LTRs) at both ends. Catalyzes viral DNA integration into the host chromosome, by performing a series of DNA cutting and joining reactions. This enzyme activity takes place after virion entry into a cell and reverse transcription of the RNA genome in dsDNA. The first step in the integration process is 3' processing. This step requires a complex comprising the viral genome, matrix protein, Vpr and integrase. This complex is called the pre-integration complex (PIC). The integrase protein removes 2 nucleotides from each 3' end of the viral DNA, leaving recessed CA OH's at the 3' ends. In the second step, the PIC enters cell nucleus. This process is mediated through integrase and Vpr proteins, and allows the virus to infect a non dividing cell. This ability to enter the nucleus is specific of lentiviruses, other retroviruses cannot and rely on cell division to access cell chromosomes. In the third step, termed strand transfer, the integrase protein joins the previously processed 3' ends to the 5' ends of strands of target cellular DNA at the site of integration. The 5'-ends are produced by integrase-catalyzed staggered cuts, 5 bp apart. A Y-shaped, gapped, recombination intermediate results, with the 5'-ends of the viral DNA strands and the 3' ends of target DNA strands remaining unjoined, flanking a gap of 5 bp. The last step is viral DNA integration into host chromosome. This involves host DNA repair synthesis in which the 5 bp gaps between the unjoined strands are filled in and then ligated. Since this process occurs at both cuts flanking the HIV genome, a 5 bp duplication of host DNA is produced at the ends of HIV-1 integration. Alternatively, Integrase may catalyze the excision of viral DNA just after strand transfer, this is termed disintegration. In Homo sapiens (Human), this protein is Gag-Pol polyprotein (gag-pol).